Consider the following 264-residue polypeptide: Apolipoprotein A-I (264 aa).

Positions 1–18 are cleaved as a signal peptide; sequence MKAVVLAVALVFLTGSQA. 2 repeat units span residues 67–88 and 89–110. The 10 X approximate tandem repeats stretch occupies residues 67 to 264; sequence LNLLENWDTL…DKASETLTAQ (198 aa). Met109 is modified (methionine sulfoxide). The stretch at 111–121 is one 3; half-length repeat; it reads KDLEEVKQKVQ. 3 repeat units span residues 122-143, 144-165, and 166-187. The stretch at 188–207 is one 7; truncated repeat; sequence PHSEQMRESLAQRLAELKSN. Methionine sulfoxide is present on Met193. Repeat unit 8 spans residues 208–229; sequence PTLNEYHTRAKTHLKTLGEKAR. Residues 230 to 240 form a 9; half-length repeat; sequence PALEDLRHSLM. Met240 and Met242 each carry methionine sulfoxide. Residues 241–264 form repeat 10; sequence PMLETLKTQVQSVIDKASETLTAQ.

This sequence belongs to the apolipoprotein A1/A4/E family. As to quaternary structure, homodimer. Interacts with APOA1BP and CLU. Component of a sperm activating protein complex (SPAP), consisting of APOA1, an immunoglobulin heavy chain, an immunoglobulin light chain and albumin. Interacts with NDRG1. Interacts with SCGB3A2. Interacts with NAXE and YJEFN3. Glycosylated. Post-translationally, palmitoylated. In terms of processing, may be acylated. Phosphorylation sites are present in the extracellular medium. In terms of tissue distribution, major protein of plasma HDL, also found in chylomicrons.

The protein localises to the secreted. Participates in the reverse transport of cholesterol from tissues to the liver for excretion by promoting cholesterol efflux from tissues and by acting as a cofactor for the lecithin cholesterol acyltransferase (LCAT). As part of the SPAP complex, activates spermatozoa motility. The sequence is that of Apolipoprotein A-I (Apoa1) from Mus musculus (Mouse).